A 538-amino-acid polypeptide reads, in one-letter code: Anti-bacteriophage protein A (538 aa).

Interacts with AbpB.

Part of an antiviral system composed of AbpA and AbpB; when both are expressed from a plasmid they confer resistance to phages T2, T4, T7 and lambda but not RB32 or RB69. Resistance is temperature dependent, it can be seen at 30 degrees Celsius but not at 37 or 42 degrees Celsius. The system impairs phage but not bacterial DNA synthesis (shown for T4, T7 and lambda). Partially suppressed by mutations in T4 gene 41, a replicative helicase. The chain is Anti-bacteriophage protein A from Escherichia coli (strain K12).